A 334-amino-acid polypeptide reads, in one-letter code: Ornithine carbamoyltransferase (334 aa).

Carbamoyl phosphate-binding positions include 57 to 60 (STRT), Gln-84, Arg-108, and 135 to 138 (HPTQ). L-ornithine is bound by residues Asn-169, Asp-233, and 237–238 (SM). Carbamoyl phosphate is bound by residues 275–276 (CL) and Arg-320.

It belongs to the aspartate/ornithine carbamoyltransferase superfamily. OTCase family.

It is found in the cytoplasm. It catalyses the reaction carbamoyl phosphate + L-ornithine = L-citrulline + phosphate + H(+). It participates in amino-acid biosynthesis; L-arginine biosynthesis; L-arginine from L-ornithine and carbamoyl phosphate: step 1/3. Its function is as follows. Reversibly catalyzes the transfer of the carbamoyl group from carbamoyl phosphate (CP) to the N(epsilon) atom of ornithine (ORN) to produce L-citrulline. In Vibrio campbellii (strain ATCC BAA-1116), this protein is Ornithine carbamoyltransferase.